A 321-amino-acid polypeptide reads, in one-letter code: High osmolarity signaling protein SHO1A (321 aa).

The Cytoplasmic segment spans residues 1 to 28; the sequence is MDYNNNRYGGGGGGSKFNLGHIVGDPFS. A helical transmembrane segment spans residues 29 to 49; sequence LATIAIATAGWLIAFVSSIIA. The Extracellular portion of the chain corresponds to 50–58; sequence NIDQEYPNY. A glycan (N-linked (GlcNAc...) asparagine) is linked at Asn-57. Residues 59–79 traverse the membrane as a helical segment; sequence SWWALAYMFFVILGVTFAVAA. Residue Asn-80 is a topological domain, cytoplasmic. A helical transmembrane segment spans residues 81–101; it reads AVYTYHVAMVGFLAAGLVFTT. The Extracellular segment spans residues 102 to 116; sequence SSVNSLIYWSDKAKQ. A helical membrane pass occupies residues 117 to 137; sequence AAAAGFILLSMVSIVWIFYFG. Residues 138 to 321 are Cytoplasmic-facing; sequence SQPTASHRQT…IAPSNYLILL (184 aa). Disordered regions lie at residues 155–181 and 194–261; these read KDHA…AQHP and TSSP…QQPT. 2 stretches are compositionally biased toward polar residues: residues 165 to 181 and 225 to 237; these read HMTQ…AQHP and NFSN…PITS. The segment covering 238 to 249 has biased composition (low complexity); it reads QNNPQNQHQQPQ. The segment covering 250–261 has biased composition (polar residues); that stretch reads DLTSPSTTQQPT. The SH3 domain occupies 262 to 321; it reads EYPYRAKAIYSYEANPDDANEISFNKHEILEVSDVSGRWWQAKKENGETGIAPSNYLILL.

Belongs to the SHO1 family. Forms homooligomers.

It is found in the cell membrane. Its function is as follows. Plasma membrane osmosensor that activates the high osmolarity glycerol (HOG) MAPK signaling pathway in response to high osmolarity. This chain is High osmolarity signaling protein SHO1A (SHO1A), found in Hortaea werneckii.